Here is a 182-residue protein sequence, read N- to C-terminus: Chromophore lyase CpcS/CpeS (182 aa).

This sequence belongs to the CpcS/CpeS biliprotein lyase family.

Functionally, covalently attaches a chromophore to Cys residue(s) of phycobiliproteins. In Thermosynechococcus vestitus (strain NIES-2133 / IAM M-273 / BP-1), this protein is Chromophore lyase CpcS/CpeS.